Here is a 442-residue protein sequence, read N- to C-terminus: 3-phosphoshikimate 1-carboxyvinyltransferase (442 aa).

Positions Met1–Ala11 are enriched in polar residues. Residues Met1–Asp25 are disordered. The 3-phosphoshikimate site is built by Lys26, Ser27, and Arg31. Residue Lys26 participates in phosphoenolpyruvate binding. Positions 98 and 126 each coordinate phosphoenolpyruvate. 3-phosphoshikimate contacts are provided by Ser171, Gln173, Asp324, and Lys351. Residue Gln173 participates in phosphoenolpyruvate binding. The active-site Proton acceptor is the Asp324. Phosphoenolpyruvate-binding residues include Arg355 and Arg398.

This sequence belongs to the EPSP synthase family. Monomer.

It localises to the cytoplasm. It carries out the reaction 3-phosphoshikimate + phosphoenolpyruvate = 5-O-(1-carboxyvinyl)-3-phosphoshikimate + phosphate. It functions in the pathway metabolic intermediate biosynthesis; chorismate biosynthesis; chorismate from D-erythrose 4-phosphate and phosphoenolpyruvate: step 6/7. Functionally, catalyzes the transfer of the enolpyruvyl moiety of phosphoenolpyruvate (PEP) to the 5-hydroxyl of shikimate-3-phosphate (S3P) to produce enolpyruvyl shikimate-3-phosphate and inorganic phosphate. This chain is 3-phosphoshikimate 1-carboxyvinyltransferase, found in Gluconobacter oxydans (strain 621H) (Gluconobacter suboxydans).